A 156-amino-acid polypeptide reads, in one-letter code: Putative thymidylate kinase (156 aa).

ATP is bound at residue 7-14 (GLDGTGKT).

This sequence belongs to the thymidylate kinase family.

The enzyme catalyses dTMP + ATP = dTDP + ADP. The protein operates within pyrimidine metabolism; dTTP biosynthesis. Its function is as follows. Catalyzes the conversion of dTMP to dTDP. The chain is Putative thymidylate kinase from Acidianus convivator (ABV).